Consider the following 393-residue polypeptide: uncharacterized protein (393 aa).

One can recognise a TRAM domain in the interval 12 to 70 (APLLGSKIKLNIEKLAIGGAGVARHEGMVVFVPQAAPNEEILAEITLVKKNFMEARVVE). [4Fe-4S] cluster is bound by residues Cys83, Cys89, Cys92, and Cys166. 4 residues coordinate S-adenosyl-L-methionine: Gln221, Tyr250, Glu273, and Asp316. Cys343 serves as the catalytic Nucleophile.

The protein belongs to the class I-like SAM-binding methyltransferase superfamily. RNA M5U methyltransferase family.

This is an uncharacterized protein from Bdellovibrio bacteriovorus (strain ATCC 15356 / DSM 50701 / NCIMB 9529 / HD100).